The chain runs to 879 residues: Phosphoenolpyruvate carboxylase (879 aa).

Catalysis depends on residues His-138 and Lys-546.

This sequence belongs to the PEPCase type 1 family. It depends on Mg(2+) as a cofactor.

It catalyses the reaction oxaloacetate + phosphate = phosphoenolpyruvate + hydrogencarbonate. Forms oxaloacetate, a four-carbon dicarboxylic acid source for the tricarboxylic acid cycle. In Pectobacterium atrosepticum (strain SCRI 1043 / ATCC BAA-672) (Erwinia carotovora subsp. atroseptica), this protein is Phosphoenolpyruvate carboxylase.